The chain runs to 192 residues: MNNNFEKSILLMVPQWIQYHVSHRNETTFYVYPEYLKPFLYFLRDHMSTQYKVCIDITAADYPSRASRFECVYNLLSVEYNSRIRIKTCVDEITTLESVTPVYSSAAWWEREVWDMFGVFFHNHPDLRRILTDYGFQGHPLRKDFPLSGYVEVRYDDSEKRVCIESVEYSQEFRYFDFESPWEQVDKNSLLK.

This sequence belongs to the complex I 30 kDa subunit family. Complex I is composed of about 30 different subunits.

It is found in the mitochondrion inner membrane. It carries out the reaction a ubiquinone + NADH + 5 H(+)(in) = a ubiquinol + NAD(+) + 4 H(+)(out). Core subunit of the mitochondrial membrane respiratory chain NADH dehydrogenase (Complex I) that is believed to belong to the minimal assembly required for catalysis. Complex I functions in the transfer of electrons from NADH to the respiratory chain. The immediate electron acceptor for the enzyme is believed to be ubiquinone. In Prototheca wickerhamii, this protein is NADH-ubiquinone oxidoreductase subunit 9 (NAD9).